The primary structure comprises 455 residues: Aminopeptidase YwaD (455 aa).

The first 31 residues, methionine 1–alanine 31, serve as a signal peptide directing secretion. Histidine 250, aspartate 262, glutamate 295, aspartate 323, and histidine 401 together coordinate Zn(2+).

This sequence belongs to the peptidase M28 family. M28B subfamily. As to quaternary structure, monomer. Zn(2+) is required as a cofactor.

The protein resides in the secreted. The catalysed reaction is Release of N-terminal Arg and Lys from oligopeptides when P1' is not Pro. Also acts on arylamides of Arg and Lys.. The enzyme catalyses Release of an N-terminal amino acid, preferentially leucine, but not glutamic or aspartic acids.. Its function is as follows. Catalyzes the hydrolysis of a range of N-terminal amino acids. This is Aminopeptidase YwaD (ywaD) from Bacillus subtilis (strain 168).